The sequence spans 142 residues: MSYWLCITNRDNWKVVKEKNVWGVPRRHENTMKRVKPGDKLVFYVKQESRKGEVLEPMIVGIFEVVSEPYSDSTKIFKSHTPGETYPIRVKIRPIKIGEVKFKPLIPKLSFIKNKKKWSGHLMGKAMREIPEEDYKLIESLL.

Belongs to the UPF0310 family.

The sequence is that of UPF0310 protein PYRAB08750 from Pyrococcus abyssi (strain GE5 / Orsay).